The following is a 105-amino-acid chain: MANRIKKGDQVVINTGKDKGKQGEVVRVEGDRVIVSNANVIKRHTKPNPQAGVAGGVVEREASIHISNVNIVNPATGKGERVGFKVLEDGRKLRVFRSSGEALDA.

The protein belongs to the universal ribosomal protein uL24 family. Part of the 50S ribosomal subunit.

Functionally, one of two assembly initiator proteins, it binds directly to the 5'-end of the 23S rRNA, where it nucleates assembly of the 50S subunit. Its function is as follows. One of the proteins that surrounds the polypeptide exit tunnel on the outside of the subunit. This is Large ribosomal subunit protein uL24 from Xanthomonas campestris pv. campestris (strain 8004).